The following is a 310-amino-acid chain: Solute carrier family 25 member 47 (310 aa).

3 Solcar repeats span residues 1–80, 93–208, and 217–304; these read MDFV…CLAH, PTKA…LSEW, and PDVL…VLRL. Transmembrane regions (helical) follow at residues 3 to 23, 49 to 69, 98 to 116, 192 to 212, 219 to 239, and 275 to 295; these read FVAG…LDTV, LWGF…VSSV, ITLS…TSPT, GHSF…LTPA, VLGV…VATP, and VLFK…MVVF.

It belongs to the mitochondrial carrier (TC 2.A.29) family.

The protein resides in the mitochondrion inner membrane. It localises to the mitochondrion outer membrane. The enzyme catalyses NAD(+)(in) = NAD(+)(out). It carries out the reaction acetyl-CoA(in) = acetyl-CoA(out). In terms of biological role, mitochondrial NAD(+) transporter that acts as a 'metabolic gate' in hepatic lipogenesis. Provides NAD(+) substrate to mitochondrial SIRT3 deacetylase and enables its NAD(+)-dependent activities in mitochondrial energy metabolism. This triggers downstream activation of PRKAA1/AMPK-alpha signaling cascade that negatively regulates sterol regulatory element-binding protein (SREBP) transcriptional activities and ATP-consuming lipogenesis to restore cellular energy balance. May transport other mitochondrial metabolites having an aromatic nucleotide and phosphate groups, such as acetyl-CoA. Does not transport amino acids. The transport mechanism remains to be elucidated. This chain is Solute carrier family 25 member 47, found in Rattus norvegicus (Rat).